A 714-amino-acid chain; its full sequence is Fatty acid oxidation complex subunit alpha (714 aa).

Residues 1–190 (MEMASAFTLN…KLGLVDDVVP (190 aa)) are enoyl-CoA hydratase. The 3-hydroxyacyl-CoA dehydrogenase stretch occupies residues 306-714 (APLNSVGILG…FWKTTATDLQ (409 aa)).

This sequence in the N-terminal section; belongs to the enoyl-CoA hydratase/isomerase family. The protein in the central section; belongs to the 3-hydroxyacyl-CoA dehydrogenase family. In terms of assembly, heterotetramer of two alpha chains (FadJ) and two beta chains (FadI).

The protein localises to the cytoplasm. The enzyme catalyses a (3S)-3-hydroxyacyl-CoA = a (2E)-enoyl-CoA + H2O. The catalysed reaction is a 4-saturated-(3S)-3-hydroxyacyl-CoA = a (3E)-enoyl-CoA + H2O. It catalyses the reaction a (3S)-3-hydroxyacyl-CoA + NAD(+) = a 3-oxoacyl-CoA + NADH + H(+). It carries out the reaction (3S)-3-hydroxybutanoyl-CoA = (3R)-3-hydroxybutanoyl-CoA. The protein operates within lipid metabolism; fatty acid beta-oxidation. In terms of biological role, catalyzes the formation of a hydroxyacyl-CoA by addition of water on enoyl-CoA. Also exhibits 3-hydroxyacyl-CoA epimerase and 3-hydroxyacyl-CoA dehydrogenase activities. The sequence is that of Fatty acid oxidation complex subunit alpha from Escherichia coli O81 (strain ED1a).